A 327-amino-acid polypeptide reads, in one-letter code: Malate dehydrogenase (327 aa).

12–18 contributes to the NAD(+) binding site; the sequence is GAAGQIA. Arginine 93 and arginine 99 together coordinate substrate. Residues asparagine 106, glutamine 113, and 130 to 132 contribute to the NAD(+) site; that span reads VGN. 2 residues coordinate substrate: asparagine 132 and arginine 163. Histidine 188 acts as the Proton acceptor in catalysis.

The protein belongs to the LDH/MDH superfamily. MDH type 2 family.

It carries out the reaction (S)-malate + NAD(+) = oxaloacetate + NADH + H(+). Functionally, catalyzes the reversible oxidation of malate to oxaloacetate. This chain is Malate dehydrogenase, found in Acidiphilium cryptum (strain JF-5).